We begin with the raw amino-acid sequence, 359 residues long: Bergaptol O-methyltransferase (359 aa).

His126 contributes to the bergaptol binding site. S-adenosyl-L-homocysteine-binding residues include Ser179, Gly203, Asp226, Asp246, and Lys260. His264 serves as a coordination point for bergaptol. His264 (proton acceptor) is an active-site residue.

Belongs to the class I-like SAM-binding methyltransferase superfamily. Cation-independent O-methyltransferase family. COMT subfamily.

It catalyses the reaction a 5-hydroxyfurocoumarin + S-adenosyl-L-methionine = a 5-methoxyfurocoumarin + S-adenosyl-L-homocysteine + H(+). The catalysed reaction is bergaptol + S-adenosyl-L-methionine = bergapten + S-adenosyl-L-homocysteine. With respect to regulation, inhibited by Cu(2+), Ni(2+) and Co(2+). This chain is Bergaptol O-methyltransferase, found in Glehnia littoralis (Beach silvertop).